A 49-amino-acid polypeptide reads, in one-letter code: Large ribosomal subunit protein bL33 (49 aa).

Belongs to the bacterial ribosomal protein bL33 family.

This Syntrophus aciditrophicus (strain SB) protein is Large ribosomal subunit protein bL33.